Here is a 189-residue protein sequence, read N- to C-terminus: Elongation factor P (189 aa).

It belongs to the elongation factor P family.

The protein localises to the cytoplasm. It participates in protein biosynthesis; polypeptide chain elongation. Involved in peptide bond synthesis. Stimulates efficient translation and peptide-bond synthesis on native or reconstituted 70S ribosomes in vitro. Probably functions indirectly by altering the affinity of the ribosome for aminoacyl-tRNA, thus increasing their reactivity as acceptors for peptidyl transferase. This Ehrlichia canis (strain Jake) protein is Elongation factor P.